The sequence spans 181 residues: Anthrone oxygenase encC (181 aa).

Transmembrane regions (helical) follow at residues 1-21, 65-81, 88-108, and 153-173; these read MASV…WLSG, QIAA…AWCA, LLYG…LLFM, and FLAG…LFAA.

The protein belongs to the anthrone oxygenase family. Endocrocin is specifically produced in conidia.

It localises to the membrane. Anthrone oxygenase; part of the gene cluster that mediates the biosynthesis of endocrocin, a simple anthraquinone interesting for many biotechnological applications. The pathway begins with the synthesis of atrochrysone thioester by the polyketide synthase (PKS) encA. The atrochrysone carboxyl ACP thioesterase encB then breaks the thioester bond and releases the atrochrysone carboxylic acid from encA. The atrochrysone carboxylic acid is then converted to endocrocin anthrone which is further oxidized into endocrocin by the anthrone oxygenase encC. The exact function of encD has not been identified yet, but it negatively regulates endocrocin production, likely through the modification of endocrocin itself. This chain is Anthrone oxygenase encC, found in Aspergillus fumigatus (strain ATCC MYA-4609 / CBS 101355 / FGSC A1100 / Af293) (Neosartorya fumigata).